The primary structure comprises 695 residues: MNQDPAETRDTAAPPPADTTSPSPVSPELEPRSAPGAQDIDAASASLTVDEDDEARLPEIDDDSAEVADGPLAVGRAAIEQAVRLAPTSPGVYRMLNAADDVLYVGKAKNVKKRLSSYARPTGHVVRIARMIAATVTVEIISTATETEALLLEANLIKQLRPRFNVLLRDDKSFPYILITGDHWAPQILKHRGAQSRPGRYFGPFASVGAVNRTITALQRAFLVRSCTDSFFESRTRPCLLYQIRRCAGPCTGEVDFPGYTELVREATDFLSGRSRAVKQELAVEMEKASNELEFETAALYRDRLAALSAIQSQQGINPRTVEEADVFAIHQEGGYSCVEVFFFRTGQNWGNRAYFPRAEKSFTPEEVLASFLAQFYDDKPPPKLILLSHDIEECELLANALCIKAGRKVEVAAPKRGEKKELVAHALTNAREALGRKLADTATQTRLMQGLATTLGLPRPPQRIEVYDNSHIQGTNAVGAMIVAGPDGFIKNQYRKFNIRSEGLTPGDDYAMMREVLQRRFKRLAAAKAEGDAAKPKEDDTPLWPDLVIIDGGRGQLNAARGVLTELGLGAEVTLLGVAKGPDRDAGRETLFMPEREAIKLEPRDPVLYFIQRLRDEAHRFVIGSHRKLRKKDIREAGLQEIPGIGPTRKRALLHHFGTLKEIERASIGDLGKVPGISAESARRIFDFFHPGPG.

Positions 1–10 are enriched in basic and acidic residues; it reads MNQDPAETRD. Residues 1–53 form a disordered region; it reads MNQDPAETRDTAAPPPADTTSPSPVSPELEPRSAPGAQDIDAASASLTVDEDD. A compositionally biased stretch (low complexity) spans 18–27; it reads DTTSPSPVSP. The region spanning 88 to 166 is the GIY-YIG domain; that stretch reads TSPGVYRMLN…IKQLRPRFNV (79 aa). The region spanning 276-311 is the UVR domain; the sequence is RAVKQELAVEMEKASNELEFETAALYRDRLAALSAI.

The protein belongs to the UvrC family. Interacts with UvrB in an incision complex.

The protein localises to the cytoplasm. Its function is as follows. The UvrABC repair system catalyzes the recognition and processing of DNA lesions. UvrC both incises the 5' and 3' sides of the lesion. The N-terminal half is responsible for the 3' incision and the C-terminal half is responsible for the 5' incision. The polypeptide is UvrABC system protein C (Rhodopseudomonas palustris (strain BisB5)).